Here is a 57-residue protein sequence, read N- to C-terminus: UPF0391 membrane protein Patl_0263 (57 aa).

2 helical membrane passes run phenylalanine 8–alanine 28 and isoleucine 30–phenylalanine 50.

This sequence belongs to the UPF0391 family.

It localises to the cell membrane. This is UPF0391 membrane protein Patl_0263 from Pseudoalteromonas atlantica (strain T6c / ATCC BAA-1087).